The sequence spans 634 residues: Bacteriophytochrome (634 aa).

Biliverdin IXalpha is bound at residue Cys13. The region spanning Cys13–Glu118 is the PAS 1 domain. The photosensory core domain stretch occupies residues Cys13 to Gln514. Positions Arg151–Ala305 constitute a GAF domain. Residues Thr325–Glu508 are phytochrome-specific (PHY). The segment at Trp452–Gln480 is tongue domain. The PAS 2 domain occupies Asp515–Gly590. Positions Asp515–Glu634 are PAS9, output module, not required to bind biliverdin IX-alpha, required for dimerization.

This sequence in the N-terminal section; belongs to the phytochrome family. As to quaternary structure, forms head-to-head homodimers. In terms of processing, contains one covalently linked biliverdin IX-alpha chromophore; present in the crystal structure as a mixture of Pr and Meta-R configurations.

In terms of biological role, photoreceptor which exists in two forms that are reversibly interconvertible by light: far-red light (733 nm) converts protein to the red-absorbing (Pr) form, while red light (630 nm) partly converts the protein to the far-red-absorbing (Pfr) form. Regulates virulence of X.campestris pv. campestris on its host plants, perhaps by fine-tuning expression to ambient light levels and/or spatial cues. The Pr form may sense light and partially inhibit virulence; in the dark (Pfr form) biofilm and xanathan production rise and bacteria are more virulent. Strains overexpressing this protein have significantly decreased amounts of extracellular beta-1,4-endoglucanase, produce less xanthin and have decreased transcription of genes involved in virulence such as endoglucanases, type 2 secretion systems, xanthan production and flagellar-dependent motility. This chain is Bacteriophytochrome (bphP), found in Xanthomonas campestris pv. campestris (strain 8004).